The primary structure comprises 506 residues: Lysine--tRNA ligase (506 aa).

Residues glutamate 415 and glutamate 422 each coordinate Mg(2+).

This sequence belongs to the class-II aminoacyl-tRNA synthetase family. As to quaternary structure, homodimer. The cofactor is Mg(2+).

The protein localises to the cytoplasm. The catalysed reaction is tRNA(Lys) + L-lysine + ATP = L-lysyl-tRNA(Lys) + AMP + diphosphate. The polypeptide is Lysine--tRNA ligase (Erwinia tasmaniensis (strain DSM 17950 / CFBP 7177 / CIP 109463 / NCPPB 4357 / Et1/99)).